The primary structure comprises 148 residues: uncharacterized protein (148 aa).

This is an uncharacterized protein from Methanocaldococcus jannaschii (strain ATCC 43067 / DSM 2661 / JAL-1 / JCM 10045 / NBRC 100440) (Methanococcus jannaschii).